The following is a 152-amino-acid chain: Protein ripply3 (152 aa).

Basic and acidic residues predominate over residues 1–24; the sequence is MRPEAAGVREARGRLCHCPGDDPG. Disordered stretches follow at residues 1–76 and 113–152; these read MRPE…GAFG and FYND…ERAE. The WRPW motif signature appears at 40–43; the sequence is WRPW. Positions 79 to 114 are ripply homology domain; sequence HPVRLYLPVSKRQEYLQSSGEKVLASFPVQATIHFY. Over residues 116–130 the composition is skewed to acidic residues; sequence DDSESGSEEEQEEEA. The span at 140–152 shows a compositional bias: basic and acidic residues; it reads AEVRDSAQEERAE.

This sequence belongs to the ripply family. In terms of assembly, interacts with TBX1.

It is found in the nucleus. Acts as a transcriptional corepressor. Negative regulator of the transcriptional activity of TBX1. Plays a role in the development of the pharyngeal apparatus and derivatives. This chain is Protein ripply3 (Ripply3), found in Mus musculus (Mouse).